We begin with the raw amino-acid sequence, 492 residues long: Transcript termination protein A18 (492 aa).

A Helicase ATP-binding domain is found at 100–256 (MIELKRPLYI…NSIINIAKLS (157 aa)). 113-120 (LACGFGKT) is a binding site for ATP. Residues 206 to 209 (DESH) carry the DESH box motif.

This sequence belongs to the helicase family. Poxviruses subfamily. As to quaternary structure, interacts with G2. Might be part of a transcription complex composed at least of G2, A18, and H5.

The protein localises to the virion. Its function is as follows. DNA helicase which seems to act as a postreplicative transcription termination factor. Involved in ATP-dependent release of nascent RNA. Forms a stable complex with single-stranded DNA, and to a lesser extent RNA. This Bos taurus (Bovine) protein is Transcript termination protein A18.